A 431-amino-acid chain; its full sequence is Neuronal pentraxin-2 (431 aa).

The first 15 residues, 1-15 (MLALLAASVALAVAA), serve as a signal peptide directing secretion. 2 N-linked (GlcNAc...) asparagine glycosylation sites follow: N148 and N189. Positions 223 to 424 (DAFKVSLPLR…GASKWPVETC (202 aa)) constitute a Pentraxin (PTX) domain. Residues C253 and C313 are joined by a disulfide bond. The Ca(2+) site is built by N277, E355, Q356, D357, and Q367. A glycan (N-linked (GlcNAc...) asparagine) is linked at N393.

Homooligomer or heterooligomer (probably pentamer) with neuronal pentraxin receptor (NPTXR). Ca(2+) serves as cofactor. In terms of tissue distribution, brain, pancreas, liver, heart and skeletal muscle. Highest levels are seen in the testis.

It localises to the secreted. Its function is as follows. Likely to play role in the modification of cellular properties that underlie long-term plasticity. Binds to agar matrix in a calcium-dependent manner. The protein is Neuronal pentraxin-2 (NPTX2) of Homo sapiens (Human).